Reading from the N-terminus, the 244-residue chain is Methanethiol S-methyltransferase (244 aa).

5 consecutive transmembrane segments (helical) span residues 7–27, 41–61, 90–110, 120–140, and 181–201; these read IIYG…AIGF, IAAP…VFAV, LLAS…PAVI, VALW…TFMI, and GFVV…LFAI.

It belongs to the nurim family.

The protein resides in the membrane. It catalyses the reaction methanethiol + S-adenosyl-L-methionine = dimethyl sulfide + S-adenosyl-L-homocysteine + H(+). Catalyzes the methylation of methanethiol (MeSH) to yield dimethylsulphide (DMS). This Mycobacterium tuberculosis (strain ATCC 25618 / H37Rv) protein is Methanethiol S-methyltransferase.